Reading from the N-terminus, the 525-residue chain is GMP synthase [glutamine-hydrolyzing] (525 aa).

A Glutamine amidotransferase type-1 domain is found at 8 to 207 (KILILDFGSQ…ALEICGCPAN (200 aa)). Cysteine 85 acts as the Nucleophile in catalysis. Catalysis depends on residues histidine 181 and glutamate 183. The GMPS ATP-PPase domain maps to 208–400 (WKPSSIIEDA…LGLPYDMLYR (193 aa)). Position 235 to 241 (235 to 241 (SGGVDSS)) interacts with ATP.

Homodimer.

The enzyme catalyses XMP + L-glutamine + ATP + H2O = GMP + L-glutamate + AMP + diphosphate + 2 H(+). It participates in purine metabolism; GMP biosynthesis; GMP from XMP (L-Gln route): step 1/1. Catalyzes the synthesis of GMP from XMP. This Shewanella pealeana (strain ATCC 700345 / ANG-SQ1) protein is GMP synthase [glutamine-hydrolyzing].